Reading from the N-terminus, the 335-residue chain is Cathepsin B-like cysteine proteinase 4 (335 aa).

Residues 1–15 (MKYLILAALVAVTAG) form the signal peptide. A propeptide spanning residues 16-80 (LVIPLVPKTQ…VVKHDINEDT (65 aa)) is cleaved from the precursor. 6 disulfide bridges follow: C94–C123, C106–C150, C142–C209, C143–C146, C179–C213, and C187–C199. C109 is a catalytic residue. N193 carries an N-linked (GlcNAc...) asparagine glycan. Residues H281 and N301 contribute to the active site.

Belongs to the peptidase C1 family.

Its subcellular location is the secreted. Thiol protease which shows activity against the fluorogenic substrate z-Arg-Arg-AMC. The chain is Cathepsin B-like cysteine proteinase 4 (cpr-4) from Caenorhabditis elegans.